Reading from the N-terminus, the 91-residue chain is MAVKIRLTRLGSKRNPFYRIVVADARSPRDGRIIEQLGTYNPAHVNAPEVKIDEELALKWLHDGAKPTDTVHNILSREGILKKFDEQKNAK.

Belongs to the bacterial ribosomal protein bS16 family.

This chain is Small ribosomal subunit protein bS16, found in Staphylococcus epidermidis (strain ATCC 35984 / DSM 28319 / BCRC 17069 / CCUG 31568 / BM 3577 / RP62A).